The sequence spans 185 residues: Photosystem I assembly protein Ycf4 (185 aa).

Transmembrane regions (helical) follow at residues 20–40 (GNFFWACILFLGSLGFLAVGA) and 57–77 (ILFFPQGVVMSFYGIAGLFIS).

It belongs to the Ycf4 family.

The protein resides in the plastid. Its subcellular location is the chloroplast thylakoid membrane. Seems to be required for the assembly of the photosystem I complex. In Oryza nivara (Indian wild rice), this protein is Photosystem I assembly protein Ycf4.